Here is a 196-residue protein sequence, read N- to C-terminus: Guanylate kinase (196 aa).

Residues 1-24 are disordered; sequence MPVESGAGNDQPKRLTVLSGPSGV. The Guanylate kinase-like domain occupies 13 to 191; it reads KRLTVLSGPS…VCDELLALIA (179 aa). 20-27 serves as a coordination point for ATP; that stretch reads GPSGVGKS.

The protein belongs to the guanylate kinase family.

Its subcellular location is the cytoplasm. The enzyme catalyses GMP + ATP = GDP + ADP. Its function is as follows. Essential for recycling GMP and indirectly, cGMP. The chain is Guanylate kinase from Thermobifida fusca (strain YX).